The chain runs to 356 residues: UDP-N-acetylglucosamine--N-acetylmuramyl-(pentapeptide) pyrophosphoryl-undecaprenol N-acetylglucosamine transferase (356 aa).

Residues 11–13 (TGG), N123, R159, S187, I241, 260–265 (ALTVAE), and Q286 each bind UDP-N-acetyl-alpha-D-glucosamine.

It belongs to the glycosyltransferase 28 family. MurG subfamily.

It localises to the cell inner membrane. The enzyme catalyses di-trans,octa-cis-undecaprenyl diphospho-N-acetyl-alpha-D-muramoyl-L-alanyl-D-glutamyl-meso-2,6-diaminopimeloyl-D-alanyl-D-alanine + UDP-N-acetyl-alpha-D-glucosamine = di-trans,octa-cis-undecaprenyl diphospho-[N-acetyl-alpha-D-glucosaminyl-(1-&gt;4)]-N-acetyl-alpha-D-muramoyl-L-alanyl-D-glutamyl-meso-2,6-diaminopimeloyl-D-alanyl-D-alanine + UDP + H(+). The protein operates within cell wall biogenesis; peptidoglycan biosynthesis. Its function is as follows. Cell wall formation. Catalyzes the transfer of a GlcNAc subunit on undecaprenyl-pyrophosphoryl-MurNAc-pentapeptide (lipid intermediate I) to form undecaprenyl-pyrophosphoryl-MurNAc-(pentapeptide)GlcNAc (lipid intermediate II). The polypeptide is UDP-N-acetylglucosamine--N-acetylmuramyl-(pentapeptide) pyrophosphoryl-undecaprenol N-acetylglucosamine transferase (Azoarcus sp. (strain BH72)).